A 1755-amino-acid chain; its full sequence is Deleted in lung and esophageal cancer protein 1 (1755 aa).

Over residues 1–12 (METRSSKTRRSL) the composition is skewed to basic residues. 3 disordered regions span residues 1 to 39 (METR…PSQP), 1339 to 1360 (PGPS…GSSS), and 1529 to 1553 (SQDG…EETA). The segment covering 30–39 (PAGSSSPSQP) has biased composition (low complexity).

Interacts with alpha- and beta-tubulin. Interacts with BBS2, BBS4, BBS5, MKKS, TCP1, CCT2, CCT3, CCT4, CCT5 and CCT7. Expressed in all tissues examined. Expression is highest in prostate and testis.

The protein localises to the cytoplasm. Essential for spermatogenesis and male fertility. May play an important role in sperm head and tail formation. May act as a tumor suppressor by inhibiting cell proliferation. The polypeptide is Deleted in lung and esophageal cancer protein 1 (Homo sapiens (Human)).